A 218-amino-acid polypeptide reads, in one-letter code: Translation initiation factor 6 (218 aa).

This sequence belongs to the eIF-6 family.

In terms of biological role, binds to the 50S ribosomal subunit and prevents its association with the 30S ribosomal subunit to form the 70S initiation complex. The sequence is that of Translation initiation factor 6 from Methanosarcina acetivorans (strain ATCC 35395 / DSM 2834 / JCM 12185 / C2A).